Consider the following 443-residue polypeptide: Threonine/serine transporter TdcC (443 aa).

Helical transmembrane passes span 24 to 44, 45 to 65, 95 to 115, 140 to 160, 163 to 183, 207 to 227, 259 to 279, 319 to 339, 363 to 383, 385 to 405, and 423 to 443; these read WVLGLFGTAIGAGVLFFPISA, GIGGLLPIIFMLILAFPIAFF, VGGVVITFLYFFAICPLLWIY, VVALAILLVMAFFIYFGKDLM, VMGYLVFPFITCLVLISLSLI, ILVTVWLGIAIMVFSFNFSPI, ASVLMVVVVMFFAFSCLFTLS, ASIIALVAIFKSFFGHYLGTL, LNMISMVIIMGSTWVIAYINP, ILDLIGAMGAPIIAALLCLLP, and SNYFVTIIGLLTILNIVYQLM.

It belongs to the amino acid/polyamine transporter 2 family. SdaC/TdcC subfamily.

Its subcellular location is the cell inner membrane. The catalysed reaction is L-threonine(in) + H(+)(in) = L-threonine(out) + H(+)(out). It catalyses the reaction L-serine(in) + H(+)(in) = L-serine(out) + H(+)(out). In terms of biological role, involved in the import of threonine and serine into the cell, with the concomitant import of a proton (symport system). This chain is Threonine/serine transporter TdcC, found in Edwardsiella piscicida.